The chain runs to 350 residues: MIYPLLLSALPLLSSAALTYRGADISSLLIEEDAGISYKNLNGETQALEDILVNNGVNSIRQRVWVDPSDGSYDLDYNLKLAKRVQAAGMSIYLDLHLSDTWADPSDQTTPTGWSTTDIDTLTWQLYNYTLEVCNTFAENDIDVEIVSIGNEISSGLLWPLGKTSNYDNIAKLLHSGAWGVKDSDLTTTPKIMIHLDNGWDWDEQEYFYKTVLATGSLLSTDFDLMGVSYYPFYSSEATLSSLKTSLTNMQSNYDKPVVVVETNWPVSCPDPEYSFPSDLTSIPFSAAGQEEFLEKLAEVVEGVTDGLGIYYWEPAWIDNAGLGSSCADNLMVDVNTDEVLESVTVFEDL.

Residues 1-16 (MIYPLLLSALPLLSSA) form the signal peptide. N-linked (GlcNAc...) asparagine glycosylation occurs at Asn-128. The active-site Proton donor is the Glu-152. Glu-262 (nucleophile) is an active-site residue.

This sequence belongs to the glycosyl hydrolase 53 family.

The protein localises to the secreted. It carries out the reaction The enzyme specifically hydrolyzes (1-&gt;4)-beta-D-galactosidic linkages in type I arabinogalactans.. Endogalactanase involved in the degradation of plant cell wall polysaccharides, and more particularly of hairy regions of pectin. This is Probable arabinogalactan endo-beta-1,4-galactanase A (galA) from Aspergillus tubingensis.